A 244-amino-acid chain; its full sequence is Serine-rich single-pass membrane protein 1 (244 aa).

The chain crosses the membrane as a helical span at residues 35–55 (CGTIGNFLLWYFVIVFVLMFF). Disordered regions lie at residues 65–112 (DKKD…LTPV), 132–191 (QSQF…LGSY), and 213–244 (HSQQ…FSKF). Basic and acidic residues predominate over residues 80-94 (ASKETSYKWQSKDGA). Composition is skewed to polar residues over residues 97–112 (PSQT…LTPV) and 132–142 (QSQFNEVNQNQ). Residues 161 to 176 (SWKESESEHHPSPDSI) show a composition bias toward basic and acidic residues. A compositionally biased stretch (polar residues) spans 231–244 (ESSISDINTKFSKF).

The protein resides in the membrane. This Macaca fascicularis (Crab-eating macaque) protein is Serine-rich single-pass membrane protein 1 (SSMEM1).